The following is a 208-amino-acid chain: Probable molybdenum cofactor guanylyltransferase (208 aa).

Residues 12–14 (IAG), Lys-24, Asp-72, and Asp-101 each bind GTP. Position 101 (Asp-101) interacts with Mg(2+).

Belongs to the MobA family. Mg(2+) serves as cofactor.

The protein resides in the cytoplasm. It catalyses the reaction Mo-molybdopterin + GTP + H(+) = Mo-molybdopterin guanine dinucleotide + diphosphate. Functionally, transfers a GMP moiety from GTP to Mo-molybdopterin (Mo-MPT) cofactor (Moco or molybdenum cofactor) to form Mo-molybdopterin guanine dinucleotide (Mo-MGD) cofactor. This Chloroflexus aggregans (strain MD-66 / DSM 9485) protein is Probable molybdenum cofactor guanylyltransferase.